A 501-amino-acid polypeptide reads, in one-letter code: Oxygen-independent coproporphyrinogen-III oxidase-like protein HemZ (501 aa).

Residues 163–405 enclose the Radical SAM core domain; the sequence is DLYRVKDEVS…VAWTKEHGYV (243 aa). Y174 serves as a coordination point for S-adenosyl-L-methionine. 2 residues coordinate [4Fe-4S] cluster: C180 and C184. Y186 is a binding site for S-adenosyl-L-methionine. [4Fe-4S] cluster is bound at residue C187. Residues G233, 234–235, E267, Q295, R307, and D332 contribute to the S-adenosyl-L-methionine site; that span reads GT.

It belongs to the anaerobic coproporphyrinogen-III oxidase family. HemZ subfamily. The cofactor is [4Fe-4S] cluster.

It functions in the pathway porphyrin-containing compound metabolism; protoporphyrin-IX biosynthesis. In terms of biological role, involved in the biosynthesis of porphyrin-containing compound. The protein is Oxygen-independent coproporphyrinogen-III oxidase-like protein HemZ (hemZ) of Bacillus subtilis (strain 168).